The primary structure comprises 559 residues: MAKEVVYRGSARQRMMQGIEILARAAIPTLGATGPSVMIQHRADGLPPISTRDGVTVANSIVLKDRVANLGARLLRDVAGTMSREAGDGTTTAIVLARHIAREMFKSLAVGADPIALKRGIDRAVARVSEDIGARAWRGDKESVILGVAAVATKGEPGVGRLLLEALDAVGVHGAVSIELGQRREDLLDVVDGYRWEKGYLSPYFVTDRARELAELEDVYLLMTDREVVDFIDLVPLLEAVTEAGGSLLIAADRVHEKALAGLLLNHVRGVFKAVAVTAPGFGDKRPNRLLDLAALTGGRAVLEAQGDRLDRVTLADLGRVRRAVVSADDTALLGIPGTEASRARLEGLRLEAEQYRALKPGQGSATGRLHELEEIEARIVGLSGKSAVYRVGGVTDVEMKERMVRIENAYRSVVSALEEGVLPGGGVGFLGSMPVLAELEARDADEARGIGIVRSALTEPLRIIGENSGLSGEAVVAKVMDHANPGWGYDQESGSFCDLHARGIWDAAKVLRLALEKAASVAGTFLTTEAVVLEIPDTDAFAGFSAEWAAATREDPRV.

Residues 88–92 (DGTTT), Gly426, and Asp507 contribute to the ATP site.

The protein belongs to the chaperonin (HSP60) family. Forms a cylinder of 14 subunits composed of two heptameric rings stacked back-to-back. Interacts with the co-chaperonin GroES.

The protein resides in the cytoplasm. The enzyme catalyses ATP + H2O + a folded polypeptide = ADP + phosphate + an unfolded polypeptide.. Its function is as follows. Together with its co-chaperonin GroES, plays an essential role in assisting protein folding. The GroEL-GroES system forms a nano-cage that allows encapsulation of the non-native substrate proteins and provides a physical environment optimized to promote and accelerate protein folding. The sequence is that of Chaperonin GroEL 3 from Methylococcus capsulatus (strain ATCC 33009 / NCIMB 11132 / Bath).